Here is a 1025-residue protein sequence, read N- to C-terminus: Beta-galactosidase (1025 aa).

Residues Asn-105 and Asp-204 each contribute to the substrate site. Asp-204 lines the Na(+) pocket. The Mg(2+) site is built by Glu-417, His-419, and Glu-462. Residues Glu-462 and Glu-538 to His-541 each bind substrate. The Proton donor role is filled by Glu-462. Catalysis depends on Glu-538, which acts as the Nucleophile. Asn-598 serves as a coordination point for Mg(2+). Residues Phe-602 and Asn-605 each coordinate Na(+). 2 residues coordinate substrate: Asn-605 and Trp-1003.

The protein belongs to the glycosyl hydrolase 2 family. Homotetramer. Mg(2+) serves as cofactor. The cofactor is Na(+).

It catalyses the reaction Hydrolysis of terminal non-reducing beta-D-galactose residues in beta-D-galactosides.. In Aeromonas hydrophila subsp. hydrophila (strain ATCC 7966 / DSM 30187 / BCRC 13018 / CCUG 14551 / JCM 1027 / KCTC 2358 / NCIMB 9240 / NCTC 8049), this protein is Beta-galactosidase.